A 559-amino-acid polypeptide reads, in one-letter code: Polypeptide N-acetylgalactosaminyltransferase 1 (559 aa).

The Cytoplasmic segment spans residues 1–8; sequence MRKFAYCK. A helical; Signal-anchor for type II membrane protein transmembrane segment spans residues 9–28; that stretch reads VVLATSLIWVLLDMFLLLYF. Residues 29 to 559 are Lumenal-facing; sequence SECNKCDEKK…LRNVTLPEIF (531 aa). The tract at residues 45-65 is disordered; sequence GDVLEPVQKPHEGPGEMGKPV. N-linked (GlcNAc...) asparagine glycosylation is present at N95. Intrachain disulfides connect C106–C339, C330–C408, C442–C459, C482–C497, and C523–C540. The tract at residues 115–225 is catalytic subdomain A; it reads LPTTSVVIVF…VGWLEPLLAR (111 aa). Positions 156 and 186 each coordinate substrate. 2 residues coordinate Mn(2+): D209 and H211. The tract at residues 285-347 is catalytic subdomain B; it reads PVRTPTMAGG…TCSHVGHVFR (63 aa). W316 is a substrate binding site. H344 serves as a coordination point for Mn(2+). Residues R347 and Y352 each coordinate substrate. The Ricin B-type lectin domain maps to 429-551; that stretch reads FSLGEIRNVE…GSRSQQWLLR (123 aa). Residue N552 is glycosylated (N-linked (GlcNAc...) asparagine).

It belongs to the glycosyltransferase 2 family. GalNAc-T subfamily. Mn(2+) is required as a cofactor. As to expression, widely expressed. Expressed in all tissues tested.

It is found in the golgi apparatus. Its subcellular location is the golgi stack membrane. The protein localises to the secreted. It carries out the reaction L-seryl-[protein] + UDP-N-acetyl-alpha-D-galactosamine = a 3-O-[N-acetyl-alpha-D-galactosaminyl]-L-seryl-[protein] + UDP + H(+). It catalyses the reaction L-threonyl-[protein] + UDP-N-acetyl-alpha-D-galactosamine = a 3-O-[N-acetyl-alpha-D-galactosaminyl]-L-threonyl-[protein] + UDP + H(+). The protein operates within protein modification; protein glycosylation. Functionally, catalyzes the initial reaction in O-linked oligosaccharide biosynthesis, the transfer of an N-acetyl-D-galactosamine residue to a serine or threonine residue on the protein receptor. Has a broad spectrum of substrates such as apomucin-, MUC5AC-, MUC1- and MUC2-derived peptides. This chain is Polypeptide N-acetylgalactosaminyltransferase 1, found in Homo sapiens (Human).